The sequence spans 884 residues: Valine--tRNA ligase (884 aa).

The 'HIGH' region signature appears at 47-57 (PNVTGALHIGH). Positions 525–529 (KMSKS) match the 'KMSKS' region motif. K528 contacts ATP. Residues 812–884 (AVDFEAELAR…QQRFRDAIGK (73 aa)) adopt a coiled-coil conformation.

Belongs to the class-I aminoacyl-tRNA synthetase family. ValS type 1 subfamily. Monomer.

It localises to the cytoplasm. It catalyses the reaction tRNA(Val) + L-valine + ATP = L-valyl-tRNA(Val) + AMP + diphosphate. Its function is as follows. Catalyzes the attachment of valine to tRNA(Val). As ValRS can inadvertently accommodate and process structurally similar amino acids such as threonine, to avoid such errors, it has a 'posttransfer' editing activity that hydrolyzes mischarged Thr-tRNA(Val) in a tRNA-dependent manner. The polypeptide is Valine--tRNA ligase (Nitratidesulfovibrio vulgaris (strain ATCC 29579 / DSM 644 / CCUG 34227 / NCIMB 8303 / VKM B-1760 / Hildenborough) (Desulfovibrio vulgaris)).